Consider the following 462-residue polypeptide: Metal cation symporter ZIP14 (462 aa).

Residues 1–16 (MPLLLLSALLPFSLMA) form the signal peptide. The Extracellular portion of the chain corresponds to 17–138 (GPTPSTGKEL…PSPGEVWGYG (122 aa)). 4 N-linked (GlcNAc...) asparagine glycosylation sites follow: Asn42, Asn68, Asn83, and Asn119. The helical transmembrane segment at 139 to 159 (FLCVTVISLCSLFGAGVVPFM) threads the bilayer. Residues 160-167 (KKACYKRL) lie on the Cytoplasmic side of the membrane. Residues 168 to 188 (LLFCIALAIGTLFSNALFQLI) form a helical membrane-spanning segment. The Extracellular segment spans residues 189-201 (PEAFGFNPLEDSY). Residues 202–222 (VFTSSVIFGGFYLFFFTEKVL) form a helical membrane-spanning segment. Topologically, residues 223-322 (KMMLKQKHEH…SDGLHNFIDG (100 aa)) are cytoplasmic. The HHHGHXHX-motif motif lies at 230–237 (HEHGHSHY). The segment at 235 to 285 (SHYSADTSKRDAEEGVTEKLQNGDLDHMIPPPHGSESDLRGDEKAVQQQDL) is disordered. Basic and acidic residues-rich tracts occupy residues 241–251 (TSKRDAEEGVT) and 269–279 (SESDLRGDEKA). Residues 323–343 (LAIGASFTVSVFQGVSTSIAI) traverse the membrane as a helical segment. Over 344-367 (LCEEFPHELGDFVILLNAGMSIPQ) the chain is Extracellular. The short motif at 346–351 (EEFPHE) is the XEXPHE-motif element. A helical membrane pass occupies residues 368–388 (ALFFNFLSACCCYLGLAFGIL). At 389 to 396 (AGSHFSSN) the chain is on the cytoplasmic side. Residues 397–417 (WIFALAGGMFLYIALSDMFPE) traverse the membrane as a helical segment. Topologically, residues 418–431 (MNEVSKEDEEGGRA) are extracellular. A helical transmembrane segment spans residues 432 to 452 (FSAFMIQNAGLLTGFAIMLLL). The Cytoplasmic segment spans residues 453–462 (TTFSGQIQLG).

The protein belongs to the ZIP transporter (TC 2.A.5) family. In terms of assembly, homotrimer.

The protein localises to the cell membrane. It localises to the apical cell membrane. The protein resides in the basolateral cell membrane. It is found in the early endosome membrane. Its subcellular location is the late endosome membrane. The protein localises to the lysosome membrane. The catalysed reaction is Zn(2+)(out) + 2 hydrogencarbonate(out) = Zn(2+)(in) + 2 hydrogencarbonate(in). The enzyme catalyses Mn(2+)(out) + 2 hydrogencarbonate(out) = Mn(2+)(in) + 2 hydrogencarbonate(in). It catalyses the reaction Fe(2+)(out) + 2 hydrogencarbonate(out) = Fe(2+)(in) + 2 hydrogencarbonate(in). It carries out the reaction Cd(2+)(out) + 2 hydrogencarbonate(out) = Cd(2+)(in) + 2 hydrogencarbonate(in). Its function is as follows. Electroneutral transporter of the plasma membrane mediating the cellular uptake of the divalent metal cations zinc, manganese and iron that are important for tissue homeostasis, metabolism, development and immunity. Functions as an energy-dependent symporter, transporting through the membranes an electroneutral complex composed of a divalent metal cation and two bicarbonate anions. Beside these endogenous cellular substrates, can also import cadmium a non-essential metal which is cytotoxic and carcinogenic. This is Metal cation symporter ZIP14 from Xenopus tropicalis (Western clawed frog).